The sequence spans 749 residues: Phosphate-regulating neutral endopeptidase PHEX (749 aa).

The Cytoplasmic portion of the chain corresponds to 1–20; the sequence is MEAETGSSVETGKKANRGTR. A helical; Signal-anchor for type II membrane protein membrane pass occupies residues 21 to 41; the sequence is IALVVFVGGTLVLGTILFLVS. Residues 42-641 lie on the Extracellular side of the membrane; it reads QGLLSLQAKQ…LNVKGKRTLG (600 aa). Residues 53–749 form the Peptidase M13 domain; that stretch reads YCLKPECIEA…NRGMDSCRLW (697 aa). Residues Cys-54 and Cys-59 are joined by a disulfide bond. Residues Asn-71, Asn-238, Asn-263, Asn-290, Asn-301, Asn-377, and Asn-484 are each glycosylated (N-linked (GlcNAc...) asparagine). 4 cysteine pairs are disulfide-bonded: Cys-77–Cys-733, Cys-85–Cys-693, Cys-142–Cys-406, and Cys-617–Cys-746. Residue His-580 participates in Zn(2+) binding. Glu-581 is an active-site residue. The Zn(2+) site is built by His-584 and Glu-642. Catalysis depends on Asp-646, which acts as the Proton donor. Asn-736 carries N-linked (GlcNAc...) asparagine glycosylation.

It belongs to the peptidase M13 family. Interacts with MEPE; the interaction is zinc-dependent (via ASARM motif). Zn(2+) serves as cofactor. Specifically expressed in ovary. Expressed at low levels in kidney.

The protein localises to the cell membrane. Peptidase that cleaves SIBLING (small integrin-binding ligand, N-linked glycoprotein)-derived ASARM peptides, thus regulating their biological activity. Cleaves ASARM peptides between Ser and Glu or Asp residues. Regulates osteogenic cell differentiation and bone mineralization through the cleavage of the MEPE-derived ASARM peptide. Promotes dentin mineralization and renal phosphate reabsorption by cleaving DMP1- and MEPE-derived ASARM peptides. Inhibits the cleavage of MEPE by CTSB/cathepsin B thus preventing MEPE degradation. The chain is Phosphate-regulating neutral endopeptidase PHEX (PHEX) from Homo sapiens (Human).